Here is a 216-residue protein sequence, read N- to C-terminus: UPF0711 protein C18orf21 homolog (216 aa).

Disordered regions lie at residues 118–185 (RSFL…ASKT) and 197–216 (SQSESKKNPKMDFRNFLSSL). Residues 124 to 136 (LKSNPTTPTSKLS) are compositionally biased toward polar residues. Residue serine 126 is modified to Phosphoserine. Residues threonine 130 and threonine 139 each carry the phosphothreonine modification. Polar residues-rich tracts occupy residues 145 to 157 (PSSANLNHTSGSK) and 167 to 182 (TPTSGQSTSICSSKNA). Residues 200–209 (ESKKNPKMDF) show a composition bias toward basic and acidic residues.

Belongs to the UPF0711 family.

The sequence is that of UPF0711 protein C18orf21 homolog from Bos taurus (Bovine).